The chain runs to 118 residues: Holo-[acyl-carrier-protein] synthase (118 aa).

Mg(2+) contacts are provided by D8 and E58.

Belongs to the P-Pant transferase superfamily. AcpS family. Requires Mg(2+) as cofactor.

Its subcellular location is the cytoplasm. The catalysed reaction is apo-[ACP] + CoA = holo-[ACP] + adenosine 3',5'-bisphosphate + H(+). Functionally, transfers the 4'-phosphopantetheine moiety from coenzyme A to a Ser of acyl-carrier-protein. The polypeptide is Holo-[acyl-carrier-protein] synthase (Listeria monocytogenes serotype 4b (strain CLIP80459)).